The sequence spans 156 residues: MAKKKTKSPGTLAENRKARHDYNIEDTIEAGIALKGTEIKSIRRGSANLKDSYAQVKRGEMFINNMHIAPYEEGNRFNHDPLRSRKLLLHKKEIIKLGERTREIGYSLIPLKLYLKHGQCKVLLGVARGKKIHDKRQALKDKAMKRDVDRAIKDRY.

Belongs to the SmpB family.

The protein resides in the cytoplasm. Its function is as follows. Required for rescue of stalled ribosomes mediated by trans-translation. Binds to transfer-messenger RNA (tmRNA), required for stable association of tmRNA with ribosomes. tmRNA and SmpB together mimic tRNA shape, replacing the anticodon stem-loop with SmpB. tmRNA is encoded by the ssrA gene; the 2 termini fold to resemble tRNA(Ala) and it encodes a 'tag peptide', a short internal open reading frame. During trans-translation Ala-aminoacylated tmRNA acts like a tRNA, entering the A-site of stalled ribosomes, displacing the stalled mRNA. The ribosome then switches to translate the ORF on the tmRNA; the nascent peptide is terminated with the 'tag peptide' encoded by the tmRNA and targeted for degradation. The ribosome is freed to recommence translation, which seems to be the essential function of trans-translation. The polypeptide is SsrA-binding protein (Staphylococcus haemolyticus (strain JCSC1435)).